The following is a 30-amino-acid chain: Brevinin-2PTa (30 aa).

Cysteine 24 and cysteine 30 are oxidised to a cystine.

In terms of tissue distribution, expressed by the skin glands.

The protein resides in the secreted. Functionally, has antibacterial activity against the Gram-positive bacterium S.aureus ATCC 25923 (MIC=18 uM) and the Gram-negative bacterium E.coli ATCC 25726 (MIC=18 uM). The sequence is that of Brevinin-2PTa from Pulchrana picturata (Malaysian fire frog).